The sequence spans 251 residues: Triosephosphate isomerase (251 aa).

10–12 serves as a coordination point for substrate; sequence NWK. The active-site Electrophile is histidine 99. Glutamate 167 functions as the Proton acceptor in the catalytic mechanism. Substrate is bound by residues glycine 173, serine 211, and 232–233; that span reads GG.

This sequence belongs to the triosephosphate isomerase family. In terms of assembly, homodimer.

Its subcellular location is the cytoplasm. The enzyme catalyses D-glyceraldehyde 3-phosphate = dihydroxyacetone phosphate. Its pathway is carbohydrate biosynthesis; gluconeogenesis. It functions in the pathway carbohydrate degradation; glycolysis; D-glyceraldehyde 3-phosphate from glycerone phosphate: step 1/1. Its function is as follows. Involved in the gluconeogenesis. Catalyzes stereospecifically the conversion of dihydroxyacetone phosphate (DHAP) to D-glyceraldehyde-3-phosphate (G3P). The chain is Triosephosphate isomerase from Neisseria meningitidis serogroup A / serotype 4A (strain DSM 15465 / Z2491).